The sequence spans 370 residues: Glutamine synthetase (370 aa).

Residues 23 to 102 form the GS beta-grasp domain; it reads VLAEYVWIDA…VLTECWNNDG (80 aa). The tract at residues 40 to 69 is disordered; the sequence is CKTLDKKPSSVEDLPEWNFDGSSTGQAPGH. The 262-residue stretch at 109 to 370 folds into the GS catalytic domain; sequence HRHESAKLMK…FKEYARESSD (262 aa).

Belongs to the glutamine synthetase family. As to quaternary structure, homooctamer.

The protein resides in the cytoplasm. The catalysed reaction is L-glutamate + NH4(+) + ATP = L-glutamine + ADP + phosphate + H(+). This Debaryomyces hansenii (strain ATCC 36239 / CBS 767 / BCRC 21394 / JCM 1990 / NBRC 0083 / IGC 2968) (Yeast) protein is Glutamine synthetase (GLN1).